Consider the following 156-residue polypeptide: ATP synthase subunit b (156 aa).

The helical transmembrane segment at 7-27 threads the bilayer; it reads LIGQTIAFIVFVWFCMKFVWP.

This sequence belongs to the ATPase B chain family. As to quaternary structure, F-type ATPases have 2 components, F(1) - the catalytic core - and F(0) - the membrane proton channel. F(1) has five subunits: alpha(3), beta(3), gamma(1), delta(1), epsilon(1). F(0) has three main subunits: a(1), b(2) and c(10-14). The alpha and beta chains form an alternating ring which encloses part of the gamma chain. F(1) is attached to F(0) by a central stalk formed by the gamma and epsilon chains, while a peripheral stalk is formed by the delta and b chains.

It is found in the cell inner membrane. F(1)F(0) ATP synthase produces ATP from ADP in the presence of a proton or sodium gradient. F-type ATPases consist of two structural domains, F(1) containing the extramembraneous catalytic core and F(0) containing the membrane proton channel, linked together by a central stalk and a peripheral stalk. During catalysis, ATP synthesis in the catalytic domain of F(1) is coupled via a rotary mechanism of the central stalk subunits to proton translocation. Functionally, component of the F(0) channel, it forms part of the peripheral stalk, linking F(1) to F(0). This chain is ATP synthase subunit b, found in Idiomarina loihiensis (strain ATCC BAA-735 / DSM 15497 / L2-TR).